The chain runs to 427 residues: ATP-sensitive inward rectifier potassium channel 12 (427 aa).

Residues 1 to 77 (MTAASRANPY…LADMFTTCVD (77 aa)) lie on the Cytoplasmic side of the membrane. Cys75 carries the post-translational modification S-nitrosocysteine. The helical transmembrane segment at 78–104 (IRWRYMLLIFSLAFLASWLLFGIIFWV) threads the bilayer. 2 residues coordinate a 1,2-diacyl-sn-glycero-3-phospho-(1D-myo-inositol-4,5-bisphosphate): Arg79 and Arg81. Over 105-129 (IAVAHGDLEPAEGRGRTPCVLQVHG) the chain is Extracellular. Cysteines 123 and 155 form a disulfide. Positions 130–146 (FMAAFLFSIETQTTIGY) form an intramembrane region, helical; Pore-forming. Thr143, Ile144, Gly145, and Tyr146 together coordinate K(+). Residues 143–148 (TIGYGL) carry the Selectivity filter motif. The Extracellular segment spans residues 147–155 (GLRCVTEEC). Residues 156 to 183 (PVAVFMVVAQSIVGCIIDSFMIGAIMAK) traverse the membrane as a helical segment. Lys183 and Lys188 together coordinate a 1,2-diacyl-sn-glycero-3-phospho-(1D-myo-inositol-4,5-bisphosphate). Residues 184 to 427 (MGRPKKRAQT…ERPYRRESEI (244 aa)) lie on the Cytoplasmic side of the membrane. A disordered region spans residues 387 to 427 (DEEDEVATDRDGRSPQPEHDFDRLQASSGALERPYRRESEI). Basic and acidic residues predominate over residues 393-409 (ATDRDGRSPQPEHDFDR). The PDZ-binding signature appears at 425-427 (SEI).

The protein belongs to the inward rectifier-type potassium channel (TC 1.A.2.1) family. KCNJ12 subfamily. As to quaternary structure, homotetramer. Forms heteromer with KCNJ4. Can form heteromeric channels with Kir2.6/KCNJ18. Association, via its PDZ-recognition domain, with LIN7A, LIN7B, LIN7C, DLG1, CASK and APBA1 plays a key role in its localization and trafficking. Highest level in cerebellum. Moderately found in kidney, forebrain and skeletal muscle. Not detected in uterus, liver and pancreas.

The protein resides in the membrane. Its subcellular location is the cell membrane. It is found in the sarcolemma. It localises to the T-tubule. It carries out the reaction K(+)(in) = K(+)(out). With respect to regulation, activated by phosphatidylinositol 4,5-biphosphate (PtdIns(4,5)P2). PtdIns(4,5)P2 binding to the cytoplasmic side of the channel triggers a conformation change leading to channel opening. Inhibited by Ba(2+). Inward rectifying potassium channel that probably participates in controlling the resting membrane potential in electrically excitable cells. It probably participates in establishing action potential waveform and excitability of neuronal and muscle tissues. Inward rectifier potassium channels are characterized by a greater tendency to allow potassium to flow into the cell rather than out of it. Their voltage dependence is regulated by the concentration of extracellular potassium; as external potassium is raised, the voltage range of the channel opening shifts to more positive voltages. The inward rectification is mainly due to the blockage of outward current by internal magnesium. This chain is ATP-sensitive inward rectifier potassium channel 12 (Kcnj12), found in Rattus norvegicus (Rat).